The following is a 193-amino-acid chain: ATP synthase subunit b 1 (193 aa).

Residues Q9 to G28 form a disordered region. A compositionally biased stretch (basic and acidic residues) spans E10 to T20. The chain crosses the membrane as a helical span at residues T40–L59.

This sequence belongs to the ATPase B chain family. As to quaternary structure, F-type ATPases have 2 components, F(1) - the catalytic core - and F(0) - the membrane proton channel. F(1) has five subunits: alpha(3), beta(3), gamma(1), delta(1), epsilon(1). F(0) has three main subunits: a(1), b(2) and c(10-14). The alpha and beta chains form an alternating ring which encloses part of the gamma chain. F(1) is attached to F(0) by a central stalk formed by the gamma and epsilon chains, while a peripheral stalk is formed by the delta and b chains.

Its subcellular location is the cell inner membrane. Its function is as follows. F(1)F(0) ATP synthase produces ATP from ADP in the presence of a proton or sodium gradient. F-type ATPases consist of two structural domains, F(1) containing the extramembraneous catalytic core and F(0) containing the membrane proton channel, linked together by a central stalk and a peripheral stalk. During catalysis, ATP synthesis in the catalytic domain of F(1) is coupled via a rotary mechanism of the central stalk subunits to proton translocation. Component of the F(0) channel, it forms part of the peripheral stalk, linking F(1) to F(0). This is ATP synthase subunit b 1 from Chelativorans sp. (strain BNC1).